Consider the following 364-residue polypeptide: Protein IncC (364 aa).

3 stretches are compositionally biased toward basic and acidic residues: residues 1–10, 26–42, and 89–100; these read MGVIHEETAY, ADHRDSAGRLSRWEATG, and HRPEVGSGRQEK. Disordered stretches follow at residues 1–63 and 75–102; these read MGVI…ASRV and VRAGNGGSAGTSGVHRPEVGSGRQEKTG.

Belongs to the ParA family.

Functionally, this is one of the proteins encoded by the trfB operon; it is involved in plasmid maintenance and replication. The chain is Protein IncC (incC) from Escherichia coli.